The chain runs to 102 residues: MNVAEFHQNIDQLWDSIEEQLEAQDADADCDRQGSVFTITFDDRSQIVVNKQEPLLELWLASRLGGLHFAWKNNDWVNGQGVRFWDALTEACQAHGEQVSFI.

Belongs to the frataxin family.

Functionally, involved in iron-sulfur (Fe-S) cluster assembly. May act as a regulator of Fe-S biogenesis. The polypeptide is Iron-sulfur cluster assembly protein CyaY (Actinobacillus succinogenes (strain ATCC 55618 / DSM 22257 / CCUG 43843 / 130Z)).